Here is a 310-residue protein sequence, read N- to C-terminus: Malate dehydrogenase (310 aa).

Residues 7 to 13 (GAAGGIG) and aspartate 34 contribute to the NAD(+) site. Arginine 81 and arginine 87 together coordinate substrate. NAD(+) is bound by residues asparagine 94 and 117–119 (ITN). The substrate site is built by asparagine 119 and arginine 153. Histidine 177 acts as the Proton acceptor in catalysis. Methionine 227 serves as a coordination point for NAD(+).

This sequence belongs to the LDH/MDH superfamily. MDH type 1 family. Homodimer.

It carries out the reaction (S)-malate + NAD(+) = oxaloacetate + NADH + H(+). Functionally, catalyzes the reversible oxidation of malate to oxaloacetate. In Idiomarina loihiensis (strain ATCC BAA-735 / DSM 15497 / L2-TR), this protein is Malate dehydrogenase.